Here is a 374-residue protein sequence, read N- to C-terminus: Succinyl-diaminopimelate desuccinylase (374 aa).

H66 provides a ligand contact to Zn(2+). The active site involves D68. D99 serves as a coordination point for Zn(2+). Catalysis depends on E133, which acts as the Proton acceptor. The Zn(2+) site is built by E134, E162, and H348.

Belongs to the peptidase M20A family. DapE subfamily. In terms of assembly, homodimer. Zn(2+) serves as cofactor. It depends on Co(2+) as a cofactor.

It catalyses the reaction N-succinyl-(2S,6S)-2,6-diaminopimelate + H2O = (2S,6S)-2,6-diaminopimelate + succinate. The protein operates within amino-acid biosynthesis; L-lysine biosynthesis via DAP pathway; LL-2,6-diaminopimelate from (S)-tetrahydrodipicolinate (succinylase route): step 3/3. Functionally, catalyzes the hydrolysis of N-succinyl-L,L-diaminopimelic acid (SDAP), forming succinate and LL-2,6-diaminopimelate (DAP), an intermediate involved in the bacterial biosynthesis of lysine and meso-diaminopimelic acid, an essential component of bacterial cell walls. In Coxiella burnetii (strain RSA 331 / Henzerling II), this protein is Succinyl-diaminopimelate desuccinylase.